Here is a 235-residue protein sequence, read N- to C-terminus: Homeobox-leucine zipper protein ATHB-12 (235 aa).

A DNA-binding region (homeobox) is located at residues 27 to 86 (KSNNQKRFSEEQIKSLELIFESETRLEPRKKVQVARELGLQPRQVAIWFQNKRARWKTKQ). The interval 87-122 (LEKEYNTLRANYNNLASQFEIMKKEKQSLVSELQRL) is leucine-zipper. 2 stretches are compositionally biased toward basic and acidic residues: residues 128–138 (RPKEEKHHECC) and 152–162 (HNGKSEPEGRL). The tract at residues 128–167 (RPKEEKHHECCGDQGLALSSSTESHNGKSEPEGRLDQGSV) is disordered.

This sequence belongs to the HD-ZIP homeobox family. Class I subfamily. As to quaternary structure, interacts with TFIIB1. Widely expressed.

It localises to the nucleus. In terms of biological role, probable transcription activator that may act as growth regulators in response to water deficit. In Arabidopsis thaliana (Mouse-ear cress), this protein is Homeobox-leucine zipper protein ATHB-12 (ATHB-12).